The following is a 283-amino-acid chain: 1D-myo-inositol 2-acetamido-2-deoxy-alpha-D-glucopyranoside deacetylase (283 aa).

H15, D18, and H150 together coordinate Zn(2+).

The protein belongs to the MshB deacetylase family. Requires Zn(2+) as cofactor.

It catalyses the reaction 1D-myo-inositol 2-acetamido-2-deoxy-alpha-D-glucopyranoside + H2O = 1D-myo-inositol 2-amino-2-deoxy-alpha-D-glucopyranoside + acetate. Functionally, catalyzes the deacetylation of 1D-myo-inositol 2-acetamido-2-deoxy-alpha-D-glucopyranoside (GlcNAc-Ins) in the mycothiol biosynthesis pathway. The protein is 1D-myo-inositol 2-acetamido-2-deoxy-alpha-D-glucopyranoside deacetylase of Actinosynnema mirum (strain ATCC 29888 / DSM 43827 / JCM 3225 / NBRC 14064 / NCIMB 13271 / NRRL B-12336 / IMRU 3971 / 101).